Consider the following 1105-residue polypeptide: Probable diguanylate cyclase DgcE (1105 aa).

The next 10 helical transmembrane spans lie at 9 to 29, 38 to 58, 64 to 84, 88 to 108, 127 to 147, 156 to 176, 190 to 207, 211 to 228, 236 to 256, and 270 to 290; these read LIALPHPLLHLVSLGLVSFIF, QFGTQLAPLWFPTSIMMVAFY, MWPGIALSCSLGNIAASILLF, SLNMTWTTINIVEAVVGAVLL, LALGSAIVPPLLGGVLVVLLT, FLIWVLSESIGALALVPLGLL, LLFESLLTLAITLTLSWL, YLPWPFTFIIVLLMWSAV, FLIFLTTVMMVSLMMAADPSL, and WLPFLLILLPANIMTMVMYAF. One can recognise a PAS 1 domain in the interval 300 to 370; the sequence is SETHFRNAME…QQVEKLISGE (71 aa). PAC domains are found at residues 374-426 and 501-552; these read YSME…VNQQ and FKLE…ALFQ. In terms of domain architecture, PAS 2 spans 553-623; sequence EKERLHITLD…LMENIYSADT (71 aa). In terms of domain architecture, PAC 3 spans 626–680; the sequence is SAIEQDVVLHCRSGGSYDVHYSITPLSTLDGSNIGSVLVIQDVTESRKMLRQLSY. The GGDEF domain maps to 712–845; it reads QRHALVFIDL…GRGRVTVYEP (134 aa). Asp-720 provides a ligand contact to Mg(2+). Substrate-binding residues include Asn-728, His-733, and Asp-737. Residue Asp-763 coordinates Mg(2+). The Proton acceptor role is filled by Asp-763. Residue Arg-783 participates in substrate binding. One can recognise an EAL domain in the interval 855 to 1104; that stretch reads AAMSLDEQWR…LLVNSSYFAI (250 aa).

Homodimer. It depends on Mg(2+) as a cofactor.

Its subcellular location is the cell inner membrane. The catalysed reaction is 2 GTP = 3',3'-c-di-GMP + 2 diphosphate. The protein operates within purine metabolism; 3',5'-cyclic di-GMP biosynthesis. Functionally, catalyzes the synthesis of cyclic-di-GMP (c-di-GMP) via the condensation of 2 GTP molecules. Involved in the control of the switch from cell motility to adhesion via regulation of cellular levels of c-di-GMP. Part of a signaling cascade that regulates curli biosynthesis. The cascade is composed of two c-di-GMP control modules, in which c-di-GMP controlled by the DgcE/PdeH pair (module I) regulates the activity of the DgcM/PdeR pair (module II), which in turn regulates activity of the transcription factor MlrA and expression of the master biofilm regulator csgD. In Escherichia coli (strain K12), this protein is Probable diguanylate cyclase DgcE.